Consider the following 207-residue polypeptide: Strobilurin A biosynthesis cluster protein r1 (207 aa).

A run of 2 helical transmembrane segments spans residues 108–128 (FIFPSLALKTTIWSVAGLLYL) and 169–189 (NLTTGVSYVLGTLVFGFPFWI).

It is found in the membrane. It functions in the pathway mycotoxin biosynthesis. Its function is as follows. Part of the gene cluster that mediates the biosynthesis of strobilurin A, an antifungal polyketide that contains a key beta-methoxyacrylate toxophore that targets the complex III of the mitochondrial electron transport chain. Strobilurin biosynthesis begins with construction of benzoyl CoA by step-wise elimination of ammonia from phenylalanine by the phenylalanine ammonia-lyase str11, oxygenation by str8 and retro-Claisen reaction to form benzoic acid, which is activated to its CoA thiolester benzoyl CoA by the dedicated CoA ligase str10. Benzoyl CoA forms the starter unit for the highly reducing polyketide synthase stpks1 that produces the polyketide prestrobilutin A. The FAD-dependent oxygenase str9 then catalyzes the key oxidative rearrangement responsible for the creation of the beta-methoxyacrylate toxophore. Str9 performs epoxidation of the 2,3 olefin of prestrobilutin A, followed by Meinwald rearrangement to furnish the aldehyde intermediate. Rapid enolization of the aldehyde intermediate would give the beta-methoxyacrylate skeleton and methylations catalyzed by str2 and str3 complete the synthesis and lead to the production of strobilurin A. The short-chain dehydrogenase stl2 and the dehydrogenase str4 play a role in the shunt pathway leading to the production of bolineol. The cluster encodes no obvious halogenase gene that could be involved in production of strobilurin B, nor any obvious dimethylallyl-transferase that could be involved in the production of strobilurin G. It is possible that unknown proteins encoded in, or near, the cluster (such as str1 or stl1) may form new classes of halogenases or dimethylally-transferases, or that the responsible genes are located elsewhere on the genome. Similarly, proteins encoded by str5/str6 hydrolases appear to have no chemical role in the biosynthesis of strobilurin A. Finally, no obvious self-resistance gene is found within the cluster. The chain is Strobilurin A biosynthesis cluster protein r1 from Strobilurus tenacellus.